We begin with the raw amino-acid sequence, 277 residues long: Large ribosomal subunit protein uL2 (277 aa).

A disordered region spans residues 222–277 (GVTMNPVDHPHGGGEGRTSGGRNPVTPWGFPTKGKKTRNNKATDKFIVSSRHKRKK).

The protein belongs to the universal ribosomal protein uL2 family. Part of the 50S ribosomal subunit. Forms a bridge to the 30S subunit in the 70S ribosome.

Functionally, one of the primary rRNA binding proteins. Required for association of the 30S and 50S subunits to form the 70S ribosome, for tRNA binding and peptide bond formation. It has been suggested to have peptidyltransferase activity; this is somewhat controversial. Makes several contacts with the 16S rRNA in the 70S ribosome. This Xanthobacter autotrophicus (strain ATCC BAA-1158 / Py2) protein is Large ribosomal subunit protein uL2.